A 202-amino-acid polypeptide reads, in one-letter code: MENLIIYAFIYLLGSIPFGLILAKFFAKTDIKKEGSKSIGATNVLRVVKEKNPKLAKKLAIATIILDFAKAAIPLLTLKFLHYDQALLWSVAVLAILGHCFSIYLLFEGGKGIATGAGAMIVLLPLEVLTAFIVWVVIGKIFKISSLASLAALLAFVVSSFIFNYDLEIHTHAPVFIIAFIIVYKHLPNIKRLIFKEECKVI.

Transmembrane regions (helical) follow at residues 3 to 23 (NLII…LILA), 87 to 107 (LLWS…YLLF), 118 to 138 (GAMI…WVVI), 144 to 164 (ISSL…FIFN), and 167 to 187 (LEIH…YKHL).

Belongs to the PlsY family. Probably interacts with PlsX.

Its subcellular location is the cell inner membrane. It catalyses the reaction an acyl phosphate + sn-glycerol 3-phosphate = a 1-acyl-sn-glycero-3-phosphate + phosphate. It functions in the pathway lipid metabolism; phospholipid metabolism. Its function is as follows. Catalyzes the transfer of an acyl group from acyl-phosphate (acyl-PO(4)) to glycerol-3-phosphate (G3P) to form lysophosphatidic acid (LPA). This enzyme utilizes acyl-phosphate as fatty acyl donor, but not acyl-CoA or acyl-ACP. In Campylobacter jejuni subsp. jejuni serotype O:2 (strain ATCC 700819 / NCTC 11168), this protein is Glycerol-3-phosphate acyltransferase.